The chain runs to 273 residues: Putative pyruvate, phosphate dikinase regulatory protein (273 aa).

149-156 (GPSRTSKT) provides a ligand contact to ADP.

The protein belongs to the pyruvate, phosphate/water dikinase regulatory protein family. PDRP subfamily.

It catalyses the reaction N(tele)-phospho-L-histidyl/L-threonyl-[pyruvate, phosphate dikinase] + ADP = N(tele)-phospho-L-histidyl/O-phospho-L-threonyl-[pyruvate, phosphate dikinase] + AMP + H(+). The catalysed reaction is N(tele)-phospho-L-histidyl/O-phospho-L-threonyl-[pyruvate, phosphate dikinase] + phosphate + H(+) = N(tele)-phospho-L-histidyl/L-threonyl-[pyruvate, phosphate dikinase] + diphosphate. Functionally, bifunctional serine/threonine kinase and phosphorylase involved in the regulation of the pyruvate, phosphate dikinase (PPDK) by catalyzing its phosphorylation/dephosphorylation. The sequence is that of Putative pyruvate, phosphate dikinase regulatory protein from Rickettsia prowazekii (strain Madrid E).